The primary structure comprises 228 residues: Cytochrome c oxidase subunit 2 (228 aa).

The Mitochondrial intermembrane segment spans residues 1-26 (MATWANLGLQDSSSPLMEQLNFFHDH). Residues 27–47 (TLLILTMITILVGYIMGMLMF) form a helical membrane-spanning segment. Topologically, residues 48 to 60 (NQFTNRYLLHGQT) are mitochondrial matrix. A helical transmembrane segment spans residues 61–81 (IEIIWTVLPAIILMFIALPSL). Residues 82–228 (RLLYLMDEIN…FIKWITNMTN (147 aa)) are Mitochondrial intermembrane-facing. Cu cation contacts are provided by histidine 161, cysteine 196, glutamate 198, cysteine 200, histidine 204, and methionine 207. Glutamate 198 serves as a coordination point for Mg(2+).

This sequence belongs to the cytochrome c oxidase subunit 2 family. Component of the cytochrome c oxidase (complex IV, CIV), a multisubunit enzyme composed of a catalytic core of 3 subunits and several supernumerary subunits. The complex exists as a monomer or a dimer and forms supercomplexes (SCs) in the inner mitochondrial membrane with ubiquinol-cytochrome c oxidoreductase (cytochrome b-c1 complex, complex III, CIII). The cofactor is Cu cation.

It is found in the mitochondrion inner membrane. The catalysed reaction is 4 Fe(II)-[cytochrome c] + O2 + 8 H(+)(in) = 4 Fe(III)-[cytochrome c] + 2 H2O + 4 H(+)(out). In terms of biological role, component of the cytochrome c oxidase, the last enzyme in the mitochondrial electron transport chain which drives oxidative phosphorylation. The respiratory chain contains 3 multisubunit complexes succinate dehydrogenase (complex II, CII), ubiquinol-cytochrome c oxidoreductase (cytochrome b-c1 complex, complex III, CIII) and cytochrome c oxidase (complex IV, CIV), that cooperate to transfer electrons derived from NADH and succinate to molecular oxygen, creating an electrochemical gradient over the inner membrane that drives transmembrane transport and the ATP synthase. Cytochrome c oxidase is the component of the respiratory chain that catalyzes the reduction of oxygen to water. Electrons originating from reduced cytochrome c in the intermembrane space (IMS) are transferred via the dinuclear copper A center (CU(A)) of subunit 2 and heme A of subunit 1 to the active site in subunit 1, a binuclear center (BNC) formed by heme A3 and copper B (CU(B)). The BNC reduces molecular oxygen to 2 water molecules using 4 electrons from cytochrome c in the IMS and 4 protons from the mitochondrial matrix. This chain is Cytochrome c oxidase subunit 2 (COXII), found in Anopheles quadrimaculatus (Common malaria mosquito).